Reading from the N-terminus, the 271-residue chain is MNKSPIQAVIFDWAGTIVDFGSFAPTSIFVEAFKQGFDFEIDLEEAREPMGLGKWDHIQAVGRIPAVDKRWNEKFGRSMISEDIDAIYAAFMPLQKAKVADHAEPILNAIEVVNGLKDKGIKIGSCSGYPREVMDVLIPVAADYGYQPDYVVATDDLPQGGRPAPFMALKNVIELGVSDVKACVKVDDSAPGIFEGHNAGMWTVGLLLSGNEAGLTFEEYQAADEATLEKAREKARAKLLKSSPHYLIDTIADFPEVVADIERRLAAGERP.

The active-site Nucleophile is Asp12. Mg(2+) is bound by residues Asp12 and Ala14. Lys54 (schiff-base intermediate with substrate) is an active-site residue. Position 188 (Asp188) interacts with Mg(2+).

It belongs to the HAD-like hydrolase superfamily. PhnX family. In terms of assembly, homodimer. It depends on Mg(2+) as a cofactor.

It carries out the reaction phosphonoacetaldehyde + H2O = acetaldehyde + phosphate + H(+). In terms of biological role, involved in phosphonate degradation. The sequence is that of Phosphonoacetaldehyde hydrolase from Vibrio vulnificus (strain CMCP6).